The following is a 165-amino-acid chain: Small ribosomal subunit protein uS5 (165 aa).

In terms of domain architecture, S5 DRBM spans 13–76 (LEEKVLVVNR…DAARKNLVSI (64 aa)).

This sequence belongs to the universal ribosomal protein uS5 family. In terms of assembly, part of the 30S ribosomal subunit. Contacts proteins S4 and S8.

Functionally, with S4 and S12 plays an important role in translational accuracy. Located at the back of the 30S subunit body where it stabilizes the conformation of the head with respect to the body. The chain is Small ribosomal subunit protein uS5 from Chlamydia muridarum (strain MoPn / Nigg).